Reading from the N-terminus, the 144-residue chain is Sec-independent protein translocase protein TatB (144 aa).

A helical transmembrane segment spans residues 1–21; that stretch reads MFEIGFWELVLVAIIGIVVVG. The disordered stretch occupies residues 97-144; that stretch reads KMIDEPPYQEPPPAAHSVQTDAEAYRDTGIEPADKSSSPEHHHDDAAR. The segment covering 119–144 has biased composition (basic and acidic residues); that stretch reads EAYRDTGIEPADKSSSPEHHHDDAAR.

This sequence belongs to the TatB family. In terms of assembly, the Tat system comprises two distinct complexes: a TatABC complex, containing multiple copies of TatA, TatB and TatC subunits, and a separate TatA complex, containing only TatA subunits. Substrates initially bind to the TatABC complex, which probably triggers association of the separate TatA complex to form the active translocon.

It localises to the cell inner membrane. Its function is as follows. Part of the twin-arginine translocation (Tat) system that transports large folded proteins containing a characteristic twin-arginine motif in their signal peptide across membranes. Together with TatC, TatB is part of a receptor directly interacting with Tat signal peptides. TatB may form an oligomeric binding site that transiently accommodates folded Tat precursor proteins before their translocation. The protein is Sec-independent protein translocase protein TatB of Dichelobacter nodosus (strain VCS1703A).